Consider the following 347-residue polypeptide: uncharacterized protein (347 aa).

This is an uncharacterized protein from Sinorhizobium fredii (strain NBRC 101917 / NGR234).